The sequence spans 214 residues: Cutinase CUT2 (214 aa).

Residues 1–18 (MQFSLSIATAILAATASA) form the signal peptide. Residues Cys-40 and Cys-117 are joined by a disulfide bond. Ser-128 acts as the Nucleophile in catalysis. A disulfide bridge links Cys-179 with Cys-186. Residue Asp-183 is part of the active site. His-196 acts as the Proton donor/acceptor in catalysis.

Belongs to the cutinase family. Post-translationally, the 2 disulfide bonds play a critical role in holding the catalytic residues in juxta-position; reduction of the disulfide bridges results in the complete inactivation of the enzyme.

It localises to the secreted. It carries out the reaction cutin + H2O = cutin monomers.. Functionally, catalyzes the hydrolysis of complex carboxylic polyesters found in the cell wall of plants. Degrades cutin, a macromolecule that forms the structure of the plant cuticle. Required for efficient penetration of the host plant cuticle by the appressorium during the initial stage of fungal infection. The sequence is that of Cutinase CUT2 from Pyricularia oryzae (strain 70-15 / ATCC MYA-4617 / FGSC 8958) (Rice blast fungus).